Consider the following 199-residue polypeptide: Probable thymidylate kinase (199 aa).

An ATP-binding site is contributed by glycine 9–threonine 16.

This sequence belongs to the thymidylate kinase family.

The catalysed reaction is dTMP + ATP = dTDP + ADP. The protein is Probable thymidylate kinase of Methanococcus maripaludis (strain C6 / ATCC BAA-1332).